The following is a 348-amino-acid chain: Dihydroorotase (348 aa).

Zn(2+) contacts are provided by histidine 17 and histidine 19. Substrate contacts are provided by residues 19–21 (HLR) and asparagine 45. Lysine 103, histidine 140, and histidine 178 together coordinate Zn(2+). At lysine 103 the chain carries N6-carboxylysine. Histidine 140 is a substrate binding site. Leucine 223 provides a ligand contact to substrate. Residue aspartate 251 participates in Zn(2+) binding. The active site involves aspartate 251. Substrate is bound by residues histidine 255 and alanine 267.

Belongs to the metallo-dependent hydrolases superfamily. DHOase family. Class II DHOase subfamily. In terms of assembly, homodimer. It depends on Zn(2+) as a cofactor.

The catalysed reaction is (S)-dihydroorotate + H2O = N-carbamoyl-L-aspartate + H(+). Its pathway is pyrimidine metabolism; UMP biosynthesis via de novo pathway; (S)-dihydroorotate from bicarbonate: step 3/3. Functionally, catalyzes the reversible cyclization of carbamoyl aspartate to dihydroorotate. The chain is Dihydroorotase from Enterobacter sp. (strain 638).